The sequence spans 346 residues: Phosphoribosylformylglycinamidine cyclo-ligase (346 aa).

It belongs to the AIR synthase family.

The protein resides in the cytoplasm. It carries out the reaction 2-formamido-N(1)-(5-O-phospho-beta-D-ribosyl)acetamidine + ATP = 5-amino-1-(5-phospho-beta-D-ribosyl)imidazole + ADP + phosphate + H(+). It functions in the pathway purine metabolism; IMP biosynthesis via de novo pathway; 5-amino-1-(5-phospho-D-ribosyl)imidazole from N(2)-formyl-N(1)-(5-phospho-D-ribosyl)glycinamide: step 2/2. The sequence is that of Phosphoribosylformylglycinamidine cyclo-ligase from Polaromonas sp. (strain JS666 / ATCC BAA-500).